The following is a 99-amino-acid chain: MAVNPLDFLKNMTSFKDNIDNLKKEMSQIVVCGRAGSDVIVVEMNGEFLVKKVSIKEEFFSDLDNEALEHMIKSAFNDAISKVKEEIKSKTMGSMPFGI.

This sequence belongs to the YbaB/EbfC family. As to quaternary structure, homodimer.

The protein localises to the cytoplasm. The protein resides in the nucleoid. In terms of biological role, binds to DNA and alters its conformation. May be involved in regulation of gene expression, nucleoid organization and DNA protection. This chain is Nucleoid-associated protein EbfC, found in Borrelia hermsii (strain HS1 / DAH).